A 123-amino-acid chain; its full sequence is UPF0102 protein VFMJ11_2324 (123 aa).

Belongs to the UPF0102 family.

The sequence is that of UPF0102 protein VFMJ11_2324 from Aliivibrio fischeri (strain MJ11) (Vibrio fischeri).